A 319-amino-acid polypeptide reads, in one-letter code: tRNA dimethylallyltransferase (319 aa).

An ATP-binding site is contributed by 9 to 16 (GPTAVGKS). 11–16 (TAVGKS) contributes to the substrate binding site. The segment at 39-42 (DSMQ) is interaction with substrate tRNA.

This sequence belongs to the IPP transferase family. As to quaternary structure, monomer. Mg(2+) is required as a cofactor.

It catalyses the reaction adenosine(37) in tRNA + dimethylallyl diphosphate = N(6)-dimethylallyladenosine(37) in tRNA + diphosphate. Its function is as follows. Catalyzes the transfer of a dimethylallyl group onto the adenine at position 37 in tRNAs that read codons beginning with uridine, leading to the formation of N6-(dimethylallyl)adenosine (i(6)A). The sequence is that of tRNA dimethylallyltransferase from Thermobifida fusca (strain YX).